A 153-amino-acid chain; its full sequence is Regulatory protein RecX (153 aa).

It belongs to the RecX family.

The protein resides in the cytoplasm. Functionally, modulates RecA activity. The protein is Regulatory protein RecX of Vibrio vulnificus (strain CMCP6).